The following is a 175-amino-acid chain: Ribosome maturation factor RimM (175 aa).

A PRC barrel domain is found at 99–171; sequence AGEYYWFQLK…RILFDLPDGL (73 aa).

Belongs to the RimM family. As to quaternary structure, binds ribosomal protein uS19.

The protein localises to the cytoplasm. Functionally, an accessory protein needed during the final step in the assembly of 30S ribosomal subunit, possibly for assembly of the head region. Essential for efficient processing of 16S rRNA. May be needed both before and after RbfA during the maturation of 16S rRNA. It has affinity for free ribosomal 30S subunits but not for 70S ribosomes. The protein is Ribosome maturation factor RimM of Syntrophotalea carbinolica (strain DSM 2380 / NBRC 103641 / GraBd1) (Pelobacter carbinolicus).